A 359-amino-acid chain; its full sequence is Mitochondrial glutathione transporter SLC25A39 (359 aa).

Residues methionine 1–glutamine 14 lie on the Mitochondrial intermembrane side of the membrane. Solcar repeat units lie at residues isoleucine 9–phenylalanine 151, serine 159–tryptophan 243, and threonine 253–phenylalanine 347. A helical transmembrane segment spans residues methionine 15 to valine 35. Residues lysine 36–arginine 121 lie on the Mitochondrial matrix side of the membrane. The [2Fe-2S] cluster site is built by cysteine 74, cysteine 78, cysteine 88, and cysteine 94. The helical transmembrane segment at threonine 122–phenylalanine 142 threads the bilayer. The Mitochondrial intermembrane segment spans residues threonine 143–aspartate 160. Residues leucine 161–proline 181 form a helical membrane-spanning segment. Over leucine 182–serine 214 the chain is Mitochondrial matrix. Residues leucine 215–phenylalanine 235 form a helical membrane-spanning segment. Topologically, residues asparagine 236 to serine 258 are mitochondrial intermembrane. The chain crosses the membrane as a helical span at residues phenylalanine 259–valine 279. The Mitochondrial matrix segment spans residues lysine 280–lysine 317. A helical membrane pass occupies residues glycine 318 to isoleucine 338. The Mitochondrial intermembrane segment spans residues serine 339 to glycine 359.

The protein belongs to the mitochondrial carrier (TC 2.A.29) family. In terms of processing, cleaved and degraded by AFG3L2; degradation by AFG3L2 is regulated by the ability of SLC25A39 to bind iron-sulfur. In absence of mitochondrial glutathione, SLC25A39 binds iron-sulfur, preventing cleavage and degradation by AFG3L2. The presence of mitochondrial glutathione prevents iron-sulfur-binding to SLC25A39, promoting cleavage and degradation by AFG3L2. As to expression, expressed in many tissues. Abundant in testis and kidney.

The protein resides in the mitochondrion inner membrane. The catalysed reaction is glutathione(in) = glutathione(out). With respect to regulation, the activity of SLC25A39 is regulated by levels of mitochondrial glutathione via its ability to bind [2Fe-2S] iron-sulfur cluster. Upon physiological levels of mitochondrial glutathione, glutathione prevents iron-sulfur-binding to SLC25A39 promoting cleavage and degradation by AFG3L2. Upon depletion of mitochondrial glutathione, SLC25A39 binds iron-sulfur, preventing cleavage and degradation by AFG3L2. In terms of biological role, mitochondrial transporter required for glutathione import into mitochondria. Glutathione, which plays key roles in oxidative metabolism, is produced exclusively in the cytosol and is imported in many organelles. Mitochondrial glutathione is required for the activity and stability of proteins containing iron-sulfur clusters, as well as erythropoiesis. This is Mitochondrial glutathione transporter SLC25A39 from Homo sapiens (Human).